A 170-amino-acid polypeptide reads, in one-letter code: NADH-quinone oxidoreductase subunit B (170 aa).

Residues Cys37, Cys38, Cys102, and Cys131 each contribute to the [4Fe-4S] cluster site.

The protein belongs to the complex I 20 kDa subunit family. NDH-1 is composed of 14 different subunits. Subunits NuoB, C, D, E, F, and G constitute the peripheral sector of the complex. Requires [4Fe-4S] cluster as cofactor.

Its subcellular location is the cell inner membrane. It catalyses the reaction a quinone + NADH + 5 H(+)(in) = a quinol + NAD(+) + 4 H(+)(out). Functionally, NDH-1 shuttles electrons from NADH, via FMN and iron-sulfur (Fe-S) centers, to quinones in the respiratory chain. The immediate electron acceptor for the enzyme in this species is believed to be ubiquinone. Couples the redox reaction to proton translocation (for every two electrons transferred, four hydrogen ions are translocated across the cytoplasmic membrane), and thus conserves the redox energy in a proton gradient. The sequence is that of NADH-quinone oxidoreductase subunit B from Geobacter sp. (strain M21).